The sequence spans 485 residues: NADH-quinone oxidoreductase subunit N (485 aa).

A run of 14 helical transmembrane segments spans residues 8 to 28, 35 to 55, 75 to 95, 105 to 125, 127 to 147, 159 to 179, 203 to 223, 235 to 255, 271 to 291, 297 to 317, 326 to 346, 374 to 394, 408 to 430, and 455 to 475; these read LIAL…MLSI, FLNA…LWFV, LYTG…YPWL, FYLL…ANHL, ALFL…GYAF, YTIL…LVYA, LLAG…LVPF, PAPV…GVVM, VVLG…ALSQ, LLGY…IALQ, VGVY…VVSL, AVMT…GFIG, WWLV…RVAV, and IVVL…QPLI.

Belongs to the complex I subunit 2 family. NDH-1 is composed of 13 different subunits. Subunits NuoA, H, J, K, L, M, N constitute the membrane sector of the complex.

Its subcellular location is the cell inner membrane. It catalyses the reaction a quinone + NADH + 5 H(+)(in) = a quinol + NAD(+) + 4 H(+)(out). In terms of biological role, NDH-1 shuttles electrons from NADH, via FMN and iron-sulfur (Fe-S) centers, to quinones in the respiratory chain. The immediate electron acceptor for the enzyme in this species is believed to be ubiquinone. Couples the redox reaction to proton translocation (for every two electrons transferred, four hydrogen ions are translocated across the cytoplasmic membrane), and thus conserves the redox energy in a proton gradient. The polypeptide is NADH-quinone oxidoreductase subunit N (Klebsiella pneumoniae subsp. pneumoniae (strain ATCC 700721 / MGH 78578)).